A 488-amino-acid polypeptide reads, in one-letter code: Ribulose bisphosphate carboxylase large chain 1 (488 aa).

Residues Asn128 and Thr178 each contribute to the substrate site. The Proton acceptor role is filled by Lys180. Residue Lys182 participates in substrate binding. Residues Lys206, Asp208, and Glu209 each contribute to the Mg(2+) site. Lys206 is subject to N6-carboxylysine. His298 functions as the Proton acceptor in the catalytic mechanism. The substrate site is built by Arg299, His331, and Ser383.

Belongs to the RuBisCO large chain family. Type I subfamily. As to quaternary structure, heterohexadecamer of 8 large chains and 8 small chains. Mg(2+) is required as a cofactor.

The enzyme catalyses 2 (2R)-3-phosphoglycerate + 2 H(+) = D-ribulose 1,5-bisphosphate + CO2 + H2O. The catalysed reaction is D-ribulose 1,5-bisphosphate + O2 = 2-phosphoglycolate + (2R)-3-phosphoglycerate + 2 H(+). Functionally, ruBisCO catalyzes two reactions: the carboxylation of D-ribulose 1,5-bisphosphate, the primary event in carbon dioxide fixation, as well as the oxidative fragmentation of the pentose substrate. Both reactions occur simultaneously and in competition at the same active site. This is Ribulose bisphosphate carboxylase large chain 1 from Methylibium petroleiphilum (strain ATCC BAA-1232 / LMG 22953 / PM1).